Here is a 355-residue protein sequence, read N- to C-terminus: DNA polymerase IV (355 aa).

The region spanning 14–198 is the UmuC domain; the sequence is IIHVDMDAFF…LPVEKFHGVG (185 aa). 2 residues coordinate Mg(2+): Asp-18 and Asp-116. Glu-117 is a catalytic residue.

It belongs to the DNA polymerase type-Y family. As to quaternary structure, monomer. Requires Mg(2+) as cofactor.

It is found in the cytoplasm. It carries out the reaction DNA(n) + a 2'-deoxyribonucleoside 5'-triphosphate = DNA(n+1) + diphosphate. Its function is as follows. Poorly processive, error-prone DNA polymerase involved in untargeted mutagenesis. Copies undamaged DNA at stalled replication forks, which arise in vivo from mismatched or misaligned primer ends. These misaligned primers can be extended by PolIV. Exhibits no 3'-5' exonuclease (proofreading) activity. May be involved in translesional synthesis, in conjunction with the beta clamp from PolIII. This chain is DNA polymerase IV, found in Streptococcus suis (strain 98HAH33).